Reading from the N-terminus, the 235-residue chain is MPKHGKKYRNATEGLDLTVKYSVEDAVAKSLAAAPAKFDETVDVAICLGVDPKYSDQMVRGAVTMPNGLGKTVRVAVFCKGEKEAEAKAAGADVAGAEELVAKIKEGWLDFDKAIATPDVMALVGQIGRVLGPRGLMPNAKTGTVTFDITTAIKEMKAGRVEFKVDKAGVLHAPLGKVSFGSEKILGNLKALIDTVNRLKPSSAKGTYMQAMAISTTMGPGVKVDPTLIKKFIEG.

It belongs to the universal ribosomal protein uL1 family. Part of the 50S ribosomal subunit.

Its function is as follows. Binds directly to 23S rRNA. The L1 stalk is quite mobile in the ribosome, and is involved in E site tRNA release. Functionally, protein L1 is also a translational repressor protein, it controls the translation of the L11 operon by binding to its mRNA. The chain is Large ribosomal subunit protein uL1 from Nitratidesulfovibrio vulgaris (strain ATCC 29579 / DSM 644 / CCUG 34227 / NCIMB 8303 / VKM B-1760 / Hildenborough) (Desulfovibrio vulgaris).